Consider the following 351-residue polypeptide: Dihydroorotate dehydrogenase (quinone) (351 aa).

FMN is bound by residues 67–71 and threonine 91; that span reads AGFDK. Position 71 (lysine 71) interacts with substrate. A substrate-binding site is contributed by 116 to 120; it reads NAMGF. Positions 145 and 178 each coordinate FMN. Asparagine 178 serves as a coordination point for substrate. The Nucleophile role is filled by serine 181. Asparagine 183 is a substrate binding site. Positions 214 and 242 each coordinate FMN. 243 to 244 serves as a coordination point for substrate; the sequence is NT. Residues glycine 262, glycine 291, and 312–313 contribute to the FMN site; that span reads YS.

This sequence belongs to the dihydroorotate dehydrogenase family. Type 2 subfamily. Monomer. It depends on FMN as a cofactor.

The protein resides in the cell membrane. The enzyme catalyses (S)-dihydroorotate + a quinone = orotate + a quinol. It functions in the pathway pyrimidine metabolism; UMP biosynthesis via de novo pathway; orotate from (S)-dihydroorotate (quinone route): step 1/1. Catalyzes the conversion of dihydroorotate to orotate with quinone as electron acceptor. This is Dihydroorotate dehydrogenase (quinone) from Helicobacter pylori (strain G27).